The following is a 253-amino-acid chain: Octanoyltransferase (253 aa).

Residues 47–236 (PETPDQVWLV…ALCEVLAARE (190 aa)) enclose the BPL/LPL catalytic domain. Substrate contacts are provided by residues 87–94 (RGGQITYH), 159–161 (ALG), and 172–174 (GVS). Cysteine 190 serves as the catalytic Acyl-thioester intermediate.

It belongs to the LipB family.

The protein localises to the cytoplasm. It catalyses the reaction octanoyl-[ACP] + L-lysyl-[protein] = N(6)-octanoyl-L-lysyl-[protein] + holo-[ACP] + H(+). It participates in protein modification; protein lipoylation via endogenous pathway; protein N(6)-(lipoyl)lysine from octanoyl-[acyl-carrier-protein]: step 1/2. Functionally, catalyzes the transfer of endogenously produced octanoic acid from octanoyl-acyl-carrier-protein onto the lipoyl domains of lipoate-dependent enzymes. Lipoyl-ACP can also act as a substrate although octanoyl-ACP is likely to be the physiological substrate. In Cupriavidus pinatubonensis (strain JMP 134 / LMG 1197) (Cupriavidus necator (strain JMP 134)), this protein is Octanoyltransferase.